A 311-amino-acid polypeptide reads, in one-letter code: Small ribosomal subunit biogenesis GTPase RsgA (311 aa).

The region spanning 88 to 246 is the CP-type G domain; sequence SKEKEQVIAA…VIDTPGIREF (159 aa). GTP is bound by residues 137–140 and 188–196; these read NKID and GHSGVGKST. The Zn(2+) site is built by Cys-270, Cys-275, His-277, and Cys-283.

It belongs to the TRAFAC class YlqF/YawG GTPase family. RsgA subfamily. Monomer. Associates with 30S ribosomal subunit, binds 16S rRNA. Requires Zn(2+) as cofactor.

Its subcellular location is the cytoplasm. In terms of biological role, one of several proteins that assist in the late maturation steps of the functional core of the 30S ribosomal subunit. Helps release RbfA from mature subunits. May play a role in the assembly of ribosomal proteins into the subunit. Circularly permuted GTPase that catalyzes slow GTP hydrolysis, GTPase activity is stimulated by the 30S ribosomal subunit. The sequence is that of Small ribosomal subunit biogenesis GTPase RsgA from Chlorobaculum parvum (strain DSM 263 / NCIMB 8327) (Chlorobium vibrioforme subsp. thiosulfatophilum).